The chain runs to 206 residues: Large ribosomal subunit protein uL4 (206 aa).

The segment at 63-93 (MYKQKGTGRARHHSARAPQFRGGGKAHGPVV) is disordered. Over residues 64 to 77 (YKQKGTGRARHHSA) the composition is skewed to basic residues.

The protein belongs to the universal ribosomal protein uL4 family. Part of the 50S ribosomal subunit.

Its function is as follows. One of the primary rRNA binding proteins, this protein initially binds near the 5'-end of the 23S rRNA. It is important during the early stages of 50S assembly. It makes multiple contacts with different domains of the 23S rRNA in the assembled 50S subunit and ribosome. In terms of biological role, forms part of the polypeptide exit tunnel. This Rhizobium meliloti (strain 1021) (Ensifer meliloti) protein is Large ribosomal subunit protein uL4.